The sequence spans 525 residues: Nucleolar and spindle-associated protein 1-C (525 aa).

Disordered stretches follow at residues 43–203 (FYPE…KKLH), 250–293 (TPVS…FSAA), 373–398 (TPESEPKQMLPSVKKNEPMTTPEKAK), and 452–525 (LSRP…VPVQ). The segment covering 58–69 (SSLTDTDELNSS) has biased composition (polar residues). The segment covering 82-92 (THRRGRGRKPL) has biased composition (basic residues). Residues 93 to 102 (KNHDTPKDEF) are compositionally biased toward basic and acidic residues. Polar residues predominate over residues 113 to 127 (SLASETDNTQHQNCL). Residues 160-169 (TTEKRQKKAS) show a composition bias toward basic and acidic residues. Positions 270–285 (PPTTGASPSRTPTNQR) are enriched in polar residues. Residues 476–494 (CGSNNNVSVLKNNFKQPHL) show a composition bias toward polar residues. Positions 495–514 (QTREDRRKQHEQDRKGKRDQ) are enriched in basic and acidic residues.

The protein belongs to the NUSAP family. In terms of assembly, interacts with DNA, microtubules, ipo7, kpna2 and kpnb1. Microtubule stabilization is inhibited by ipo7 and kpna2, while microtubule bundling is inhibited by kpnb1. Active GTP-bound ran causes dissociation of ipo7 and kpnb1.

It localises to the cytoplasm. It is found in the nucleus. The protein resides in the cytoskeleton. Its subcellular location is the spindle. Microtubule-associated protein with the capacity to bundle and stabilize microtubules. May associate with chromosomes and promote the organization of meiotic or mitotic spindle microtubules around them. This is Nucleolar and spindle-associated protein 1-C (nusap1-c) from Xenopus laevis (African clawed frog).